The following is a 319-amino-acid chain: MEAFPVIDMEKLNGEERAPTMEKIKDACENWGFFELVNHGISHELMDTVERLTKEHYNKCMEQRFKEMVATKGLEAVQSEINDLDWESTFFLRHLPVSNISEIPDLEQDHRKAMKEFAEKLEKLAEQLLDLLCENVGLEKGYLKKAFYGSKGPTFGTKVSNYPPCPRPELIKGLRAHTDAGGIILLFQDNKVSGLQLLKDGEWIDVPPMKHSIVINIGDQLEVITNGKYKSVMHRVIAQPDGNRMSIASFYNPGSDAVMYPAPALVDKEEDQQKQVYPKFVFEDYMKLYAGLKFQAKEPRFEAMKAMENAVNLGPIATI.

In terms of domain architecture, Fe2OG dioxygenase spans 153–253 (PTFGTKVSNY…RMSIASFYNP (101 aa)). Residues His-177, Asp-179, and His-234 each contribute to the Fe cation site.

It belongs to the iron/ascorbate-dependent oxidoreductase family. The cofactor is Fe cation.

The enzyme catalyses 1-aminocyclopropane-1-carboxylate + L-ascorbate + O2 = ethene + L-dehydroascorbate + hydrogen cyanide + CO2 + 2 H2O. The protein operates within alkene biosynthesis; ethylene biosynthesis via S-adenosyl-L-methionine; ethylene from S-adenosyl-L-methionine: step 2/2. The chain is 1-aminocyclopropane-1-carboxylate oxidase (ACO) from Actinidia deliciosa (Kiwi).